Reading from the N-terminus, the 143-residue chain is Large ribosomal subunit protein uL13 (143 aa).

Belongs to the universal ribosomal protein uL13 family. In terms of assembly, part of the 50S ribosomal subunit.

Functionally, this protein is one of the early assembly proteins of the 50S ribosomal subunit, although it is not seen to bind rRNA by itself. It is important during the early stages of 50S assembly. The chain is Large ribosomal subunit protein uL13 from Coprothermobacter proteolyticus (strain ATCC 35245 / DSM 5265 / OCM 4 / BT).